The following is a 65-amino-acid chain: DNA-directed RNA polymerase subunit omega (65 aa).

Belongs to the RNA polymerase subunit omega family. As to quaternary structure, the RNAP catalytic core consists of 2 alpha, 1 beta, 1 beta' and 1 omega subunit. When a sigma factor is associated with the core the holoenzyme is formed, which can initiate transcription.

It carries out the reaction RNA(n) + a ribonucleoside 5'-triphosphate = RNA(n+1) + diphosphate. In terms of biological role, promotes RNA polymerase assembly. Latches the N- and C-terminal regions of the beta' subunit thereby facilitating its interaction with the beta and alpha subunits. The sequence is that of DNA-directed RNA polymerase subunit omega from Baumannia cicadellinicola subsp. Homalodisca coagulata.